The chain runs to 95 residues: MPRSLKKGPFVEDHLLKKVDAQNDKKDKRVIKTWSRRSTIVPEMIGHTIAVYNGKQHVPVFVNEQMIGHKLGEFSPTRTYRGHGADKNAKGSKKK.

The interval 73–95 (EFSPTRTYRGHGADKNAKGSKKK) is disordered.

This sequence belongs to the universal ribosomal protein uS19 family.

Its function is as follows. Protein S19 forms a complex with S13 that binds strongly to the 16S ribosomal RNA. This chain is Small ribosomal subunit protein uS19, found in Deinococcus radiodurans (strain ATCC 13939 / DSM 20539 / JCM 16871 / CCUG 27074 / LMG 4051 / NBRC 15346 / NCIMB 9279 / VKM B-1422 / R1).